Here is a 256-residue protein sequence, read N- to C-terminus: Coiled-coil domain-containing protein 90B, mitochondrial (256 aa).

The N-terminal 42 residues, 1–42 (MRSRWIWRFLRPDGGGIRWTSTPHGRLSPALRRGFLTTTTKS), are a transit peptide targeting the mitochondrion. Positions 129 to 167 (LEKSEFANLRAENEKMKIELDQVKQQLTNETSRIRADNK) form a coiled coil. A helical membrane pass occupies residues 231–253 (TIRYLAASVFTCLAIALGFYRFW).

This sequence belongs to the CCDC90 family. As to quaternary structure, interacts with MCU.

It localises to the mitochondrion membrane. The polypeptide is Coiled-coil domain-containing protein 90B, mitochondrial (Ccdc90b) (Mus musculus (Mouse)).